The sequence spans 657 residues: Acetyl-coenzyme A synthetase (657 aa).

Residues 192–195 (RRGK) and Thr311 each bind CoA. Residues 387 to 389 (GEP), 411 to 416 (DTWWQT), Asp504, Arg519, and Arg530 each bind ATP. Mg(2+) contacts are provided by His543 and Val546. Arg592 lines the CoA pocket. Residue Lys617 is modified to N6-acetyllysine.

Belongs to the ATP-dependent AMP-binding enzyme family. Mg(2+) is required as a cofactor. Acetylated. Deacetylation by the SIR2-homolog deacetylase activates the enzyme.

It catalyses the reaction acetate + ATP + CoA = acetyl-CoA + AMP + diphosphate. In terms of biological role, catalyzes the conversion of acetate into acetyl-CoA (AcCoA), an essential intermediate at the junction of anabolic and catabolic pathways. AcsA undergoes a two-step reaction. In the first half reaction, AcsA combines acetate with ATP to form acetyl-adenylate (AcAMP) intermediate. In the second half reaction, it can then transfer the acetyl group from AcAMP to the sulfhydryl group of CoA, forming the product AcCoA. This chain is Acetyl-coenzyme A synthetase, found in Campylobacter jejuni subsp. jejuni serotype O:6 (strain 81116 / NCTC 11828).